The sequence spans 123 residues: Con-ikot-ikot (123 aa).

The first 18 residues, 1–18, serve as a signal peptide directing secretion; sequence MAMNMSMTLCMFVMVVVA. A propeptide spanning residues 19 to 37 is cleaved from the precursor; it reads ATVIDSTQLQEPDLSRMRR. Intrachain disulfides connect C49/C80, C50/C89, C57/C72, C90/C118, and C96/C113.

In terms of assembly, homodimer; disulfide-linked. In terms of tissue distribution, expressed by the venom duct.

Its subcellular location is the secreted. Functionally, potently and selectively blocks the desensitization of ionotropic glutamate AMPA receptors (GRIA1, GRIA2, GRIA3 and GRIA4). Binds to a different site than does the drug cyclothiazide. The toxin acts like a straitjacket on the 'gating ring' of the ligand-binding domain (LBD) of the receptor. It does so by restraining the domains via both intra- and interdimer cross-links such that agonist-induced closure of the LBD 'clamshells' is transduced into an irislike expansion of the gating ring. Compared to other desensitization blockers, it is a poor stabilizer of the open channel because toxin-bound AMPA receptors undergo frequent brief closures. In vitro, application of the toxin to hippocampal slices causes a large and rapid increase in resting AMPA receptor-mediated current leading to neuronal death. In Conus striatus (Striated cone), this protein is Con-ikot-ikot.